We begin with the raw amino-acid sequence, 183 residues long: Translation initiation factor IF-3 (183 aa).

Residues 1 to 13 are compositionally biased toward polar residues; the sequence is MKQPDRNQQQGAK. The tract at residues 1–21 is disordered; sequence MKQPDRNQQQGAKSNRPAIND.

The protein belongs to the IF-3 family. In terms of assembly, monomer.

Its subcellular location is the cytoplasm. Its function is as follows. IF-3 binds to the 30S ribosomal subunit and shifts the equilibrium between 70S ribosomes and their 50S and 30S subunits in favor of the free subunits, thus enhancing the availability of 30S subunits on which protein synthesis initiation begins. The protein is Translation initiation factor IF-3 of Acinetobacter baumannii (strain AYE).